A 459-amino-acid polypeptide reads, in one-letter code: uncharacterized protein (459 aa).

12 helical membrane-spanning segments follow: residues 25–45 (SYGF…IYLL), 52–72 (AGIP…FAAI), 95–115 (PYLL…FLSP), 123–143 (LIYA…VNIP), 167–187 (IGSL…LVKF), 192–212 (VGYP…FYIC), 249–269 (VLMT…LVYF), 279–299 (LMAY…VFLP), 310–330 (TAMI…MLPS), 332–352 (VYVF…PNGI), 389–409 (SLSG…PNAV), and 420–440 (ALLL…IGFL).

Belongs to the sodium:galactoside symporter (TC 2.A.2) family.

It localises to the cell membrane. This is an uncharacterized protein from Bacillus subtilis (strain 168).